The chain runs to 329 residues: DNA-directed RNA polymerase subunit alpha (329 aa).

The interval 1 to 235 is alpha N-terminal domain (alpha-NTD); the sequence is MQGSVTEFLK…EQLEAFVDLR (235 aa). Positions 249 to 329 are alpha C-terminal domain (alpha-CTD); sequence FDPILLRPVD…NWPPASIADE (81 aa).

Belongs to the RNA polymerase alpha chain family. Homodimer. The RNAP catalytic core consists of 2 alpha, 1 beta, 1 beta' and 1 omega subunit. When a sigma factor is associated with the core the holoenzyme is formed, which can initiate transcription.

It carries out the reaction RNA(n) + a ribonucleoside 5'-triphosphate = RNA(n+1) + diphosphate. Functionally, DNA-dependent RNA polymerase catalyzes the transcription of DNA into RNA using the four ribonucleoside triphosphates as substrates. The chain is DNA-directed RNA polymerase subunit alpha from Photorhabdus laumondii subsp. laumondii (strain DSM 15139 / CIP 105565 / TT01) (Photorhabdus luminescens subsp. laumondii).